The chain runs to 286 residues: Prepilin leader peptidase/N-methyltransferase (286 aa).

Residues 10 to 30 (FAVPLAAVLGLLVGSFLNVVI) form a helical membrane-spanning segment. Residues Cys70, Cys73, Cys95, and Cys98 each contribute to the Zn(2+) site. The next 6 membrane-spanning stretches (helical) occupy residues 102-122 (ISIR…LVAW), 126-146 (WSWI…LTFI), 157-177 (MTLP…FVPL), 181-201 (VLGA…YKLL), 224-244 (ISAL…AAIV), and 250-270 (GRHF…FTAN).

This sequence belongs to the peptidase A24 family. Zn(2+) is required as a cofactor.

It localises to the cell inner membrane. The enzyme catalyses Typically cleaves a -Gly-|-Phe- bond to release an N-terminal, basic peptide of 5-8 residues from type IV prepilin, and then N-methylates the new N-terminal amino group, the methyl donor being S-adenosyl-L-methionine.. Functionally, plays an essential role in type IV pili and type II pseudopili formation by proteolytically removing the leader sequence from substrate proteins and subsequently monomethylating the alpha-amino group of the newly exposed N-terminal phenylalanine. The chain is Prepilin leader peptidase/N-methyltransferase (pilD) from Neisseria gonorrhoeae.